Here is a 260-residue protein sequence, read N- to C-terminus: Small ribosomal subunit protein eS1 (260 aa).

Residues 1 to 18 (MAVGKNKRISKGKKGGKK) show a composition bias toward basic residues. The disordered stretch occupies residues 1 to 22 (MAVGKNKRISKGKKGGKKKAAD).

This sequence belongs to the eukaryotic ribosomal protein eS1 family. Component of the small ribosomal subunit. Mature ribosomes consist of a small (40S) and a large (60S) subunit. The 40S subunit contains about 33 different proteins and 1 molecule of RNA (18S). The 60S subunit contains about 49 different proteins and 3 molecules of RNA (25S, 5.8S and 5S).

The protein localises to the cytoplasm. This Helianthus annuus (Common sunflower) protein is Small ribosomal subunit protein eS1.